The sequence spans 223 residues: MQWAVGRRWLWVALFLAAVAVLTQIVWLWLGTQNFVFQREEIAQLARQYAGLDHELAFSKLIVELRRLHPVHVLPDEELQWVFVNAGGWMGAMCLLHASLSEYVLLFGTALGSPRHSGRYWAEISDTIISGTFHQWREGTTKSEVFYPGETVVHGPGEATAVEWGPNTWMVEYGRGVIPSTLGFALADTVFSTQDFLTLFYTLRVYARALQLELTTYLFGQDP.

At M1–W9 the chain is on the lumenal side. Residues Q2–R8 are targeting to endoplasmic reticulum-associated lipid droplets. A helical transmembrane segment spans residues L10–L30. Over G31–P223 the chain is Cytoplasmic. The segment at S99–L106 is important for ligand-binding. The interval V177 to P223 is C-terminal hydrophobic region.

This sequence belongs to the ERG2 family. Homotrimer. Forms a ternary complex with ANK2 and ITPR3. The complex is disrupted by agonists. Interacts with KCNA4. Interacts with KCNA2; cocaine consumption leads to increased interaction. Interacts with RNF112 in an oxidative stress-regulated manner. As to expression, ubiquitously expressed with higher expression in liver, kidney and steroid-producing tissues such as placenta, ovary and adrenal gland.

Its subcellular location is the nucleus inner membrane. It is found in the nucleus outer membrane. The protein localises to the nucleus envelope. The protein resides in the cytoplasmic vesicle. It localises to the endoplasmic reticulum membrane. Its subcellular location is the membrane. It is found in the lipid droplet. The protein localises to the cell junction. The protein resides in the cell membrane. It localises to the cell projection. Its subcellular location is the growth cone. It is found in the postsynaptic density membrane. Its function is as follows. Functions in lipid transport from the endoplasmic reticulum and is involved in a wide array of cellular functions probably through regulation of the biogenesis of lipid microdomains at the plasma membrane. Involved in the regulation of different receptors it plays a role in BDNF signaling and EGF signaling. Also regulates ion channels like the potassium channel and could modulate neurotransmitter release. Plays a role in calcium signaling through modulation together with ANK2 of the ITP3R-dependent calcium efflux at the endoplasmic reticulum. Plays a role in several other cell functions including proliferation, survival and death. Originally identified for its ability to bind various psychoactive drugs it is involved in learning processes, memory and mood alteration. Necessary for proper mitochondrial axonal transport in motor neurons, in particular the retrograde movement of mitochondria. Plays a role in protecting cells against oxidative stress-induced cell death via its interaction with RNF112. This Cavia porcellus (Guinea pig) protein is Sigma non-opioid intracellular receptor 1 (SIGMAR1).